The primary structure comprises 171 residues: Large ribosomal subunit protein bL17 (171 aa).

The span at 140–152 (KREIQTKAREEKR) shows a compositional bias: basic and acidic residues. A disordered region spans residues 140–171 (KREIQTKAREEKRATRKSNSAPVNKETTSKKK). A compositionally biased stretch (polar residues) spans 156-165 (KSNSAPVNKE).

Belongs to the bacterial ribosomal protein bL17 family. As to quaternary structure, part of the 50S ribosomal subunit. Contacts protein L32.

This Leptospira interrogans serogroup Icterohaemorrhagiae serovar Lai (strain 56601) protein is Large ribosomal subunit protein bL17.